The primary structure comprises 440 residues: Transposon Ty1-MR1 Gag polyprotein (440 aa).

Composition is skewed to polar residues over residues 1–31 (MESQ…TTQD), 46–60 (VSTQ…TPLS), and 137–168 (VGTH…TNQH). Disordered stretches follow at residues 1 to 88 (MESQ…YPQQ), 137 to 174 (VGTH…PPPI), and 350 to 424 (QQES…TTEP). Residues 299–401 (NNGIPINNKV…NSQSRTARAH (103 aa)) are RNA-binding. A compositionally biased stretch (basic and acidic residues) spans 363–372 (SPSDEKKDSR). Over residues 373-411 (TYTNTTKPKSITRNSQKPNNSQSRTARAHNVSTFNNSPG) the composition is skewed to polar residues.

Homotrimer.

The protein resides in the cytoplasm. Capsid protein (CA) is the structural component of the virus-like particle (VLP), forming the shell that encapsulates the retrotransposons dimeric RNA genome. The particles are assembled from trimer-clustered units and there are holes in the capsid shells that allow for the diffusion of macromolecules. CA also has nucleocapsid-like chaperone activity, promoting primer tRNA(i)-Met annealing to the multipartite primer-binding site (PBS), dimerization of Ty1 RNA and initiation of reverse transcription. The protein is Transposon Ty1-MR1 Gag polyprotein (TY1A-MR1) of Saccharomyces cerevisiae (strain ATCC 204508 / S288c) (Baker's yeast).